A 177-amino-acid chain; its full sequence is Alkyl hydroperoxide reductase AhpD (177 aa).

Cys-130 (proton donor) is an active-site residue. Cys-130 and Cys-133 form a disulfide bridge. Cys-133 functions as the Cysteine sulfenic acid (-SOH) intermediate in the catalytic mechanism.

Belongs to the AhpD family. Homotrimer.

It carries out the reaction N(6)-[(R)-dihydrolipoyl]-L-lysyl-[lipoyl-carrier protein] + a hydroperoxide = N(6)-[(R)-lipoyl]-L-lysyl-[lipoyl-carrier protein] + an alcohol + H2O. Functionally, antioxidant protein with alkyl hydroperoxidase activity. Required for the reduction of the AhpC active site cysteine residues and for the regeneration of the AhpC enzyme activity. In Mycobacterium bovis (strain ATCC BAA-935 / AF2122/97), this protein is Alkyl hydroperoxide reductase AhpD.